Here is a 153-residue protein sequence, read N- to C-terminus: Subtilisin propeptide-like protein (153 aa).

A signal peptide spans M1–S27. The segment at Q127–L153 is dispensable for parasite growth in host erythrocytes.

The protein resides in the secreted. It is found in the parasitophorous vacuole lumen. It localises to the cell membrane. In terms of biological role, acts as a specific inhibitor of subtilisin-like protease SUB1. This is Subtilisin propeptide-like protein from Plasmodium falciparum (isolate 3D7).